Here is a 455-residue protein sequence, read N- to C-terminus: F-box/FBD/LRR-repeat protein At3g51530 (455 aa).

The interval 1–26 is disordered; that stretch reads MKNSERFSAAKPLMEQGGKSSRKPGF. The 47-residue stretch at 29–75 folds into the F-box domain; it reads EDRISELPEVLLLQILSSLPTKLVISTSVLSKRWLSLWKMVQRLEFE. LRR repeat units lie at residues 80-106, 155-182, 183-208, 227-257, 277-302, and 325-351; these read IYDF…HLKV, ETLK…HLLS, VVYK…VLRR, TLLL…GIES, IRNV…SLDL, and THKV…KLID. The FBD domain occupies 370–417; that stretch reads KWNQPKYVPECLETFMWRNCNWGREEEKEVATYILRNARQLKKATFST.

This is F-box/FBD/LRR-repeat protein At3g51530 from Arabidopsis thaliana (Mouse-ear cress).